Reading from the N-terminus, the 492-residue chain is N-succinylglutamate 5-semialdehyde dehydrogenase (492 aa).

Gly-220–Gly-225 provides a ligand contact to NAD(+). Residues Glu-243 and Cys-277 contribute to the active site.

Belongs to the aldehyde dehydrogenase family. AstD subfamily.

The catalysed reaction is N-succinyl-L-glutamate 5-semialdehyde + NAD(+) + H2O = N-succinyl-L-glutamate + NADH + 2 H(+). It functions in the pathway amino-acid degradation; L-arginine degradation via AST pathway; L-glutamate and succinate from L-arginine: step 4/5. Catalyzes the NAD-dependent reduction of succinylglutamate semialdehyde into succinylglutamate. This is N-succinylglutamate 5-semialdehyde dehydrogenase from Salmonella dublin (strain CT_02021853).